The chain runs to 98 residues: Small ribosomal subunit protein bS20 (98 aa).

A compositionally biased stretch (basic residues) spans 1–12 (MAPRKPSKKVGP). Residues 1-34 (MAPRKPSKKVGPQKRPSAEKRVITSKKKQLRNQS) form a disordered region.

This sequence belongs to the bacterial ribosomal protein bS20 family.

Its function is as follows. Binds directly to 16S ribosomal RNA. The sequence is that of Small ribosomal subunit protein bS20 from Chlamydia muridarum (strain MoPn / Nigg).